The chain runs to 313 residues: Extracellular metalloprotease (313 aa).

Positions 1–34 (MKLVPRFRKQWFAYLTVLCLALAAAVSFGVPAKA) are cleaved as a signal peptide. The tract at residues 35 to 74 (AENPQTSVSNTGKEADATKNQTSKADQVSAPYEGTGKTSK) is disordered. The propeptide occupies 35–93 (AENPQTSVSNTGKEADATKNQTSKADQVSAPYEGTGKTSKSLYGGQTELEKNIQTLQPS). The segment covering 37–60 (NPQTSVSNTGKEADATKNQTSKAD) has biased composition (polar residues). Residues Cys-131 and Cys-147 are joined by a disulfide bond. Active-site charge relay system residues include His-146 and Ser-267.

The protein belongs to the peptidase S1B family. Monomer.

Its subcellular location is the secreted. This is Extracellular metalloprotease (mpr) from Bacillus subtilis (strain 168).